A 427-amino-acid chain; its full sequence is Trigger factor (427 aa).

The region spanning 163 to 248 is the PPIase FKBP-type domain; it reads GNIAIIDFKG…VKGIKAKELP (86 aa).

It belongs to the FKBP-type PPIase family. Tig subfamily.

It is found in the cytoplasm. It catalyses the reaction [protein]-peptidylproline (omega=180) = [protein]-peptidylproline (omega=0). In terms of biological role, involved in protein export. Acts as a chaperone by maintaining the newly synthesized protein in an open conformation. Functions as a peptidyl-prolyl cis-trans isomerase. The polypeptide is Trigger factor (Clostridium botulinum (strain Eklund 17B / Type B)).